The following is a 291-amino-acid chain: Taste receptor type 2 member 16 (291 aa).

Met1 is a topological domain (extracellular). A helical membrane pass occupies residues 2-22; that stretch reads IPIQLTVFFMIIYVLESLTII. Residues 23–41 are Cytoplasmic-facing; that stretch reads VQSSLIVAVLGREWLQVRR. Residues 42-62 form a helical membrane-spanning segment; the sequence is LMPVDMILISLGISRFCLQWA. The Extracellular segment spans residues 63 to 84; sequence SMLNNFCSYFNLNYVLCNLTIT. An N-linked (GlcNAc...) asparagine glycan is attached at Asn80. A helical membrane pass occupies residues 85–105; that stretch reads WEFFNILTFWLNSLLTVFYCI. Residues 106–125 are Cytoplasmic-facing; that stretch reads KASSFTHHIFLWLRWRILRL. Residues 126–146 form a helical membrane-spanning segment; the sequence is FPWILLGSLMITCVTIIPSAI. Residues 147–182 are Extracellular-facing; sequence GNYIQIQLLTMEHLPRNSTVTDKLEKFHQYQFQAHT. Asn163 carries N-linked (GlcNAc...) asparagine glycosylation. The helical transmembrane segment at 183-203 threads the bilayer; sequence VALVIPFILFLASTILLMASL. Residues 204–228 are Cytoplasmic-facing; that stretch reads TKQIQHHSTGHCNPSMKAHFTALRS. Residues 229-249 traverse the membrane as a helical segment; the sequence is LAVLFIVFTSYFLTILITIIG. Over 250-257 the chain is Extracellular; that stretch reads TLFDKRCW. Residues 258-278 form a helical membrane-spanning segment; sequence LWVWEAFVYAFILMHSTSLML. The Cytoplasmic portion of the chain corresponds to 279-291; it reads SSPTLKRILKGKC.

This sequence belongs to the G-protein coupled receptor T2R family. As to quaternary structure, interacts with RTP3 and RTP4.

It is found in the cell membrane. In terms of biological role, receptor that may play a role in the perception of bitterness and is gustducin-linked. May play a role in sensing the chemical composition of the gastrointestinal content. The activity of this receptor may stimulate alpha gustducin, mediate PLC-beta-2 activation and lead to the gating of TRPM5. This chain is Taste receptor type 2 member 16 (TAS2R16), found in Pan paniscus (Pygmy chimpanzee).